The primary structure comprises 244 residues: MNEIRETLVQTPKKATAVIRAEALAKTYAEGKMRTPVFDGLDLSVATGETVAIVGASGAGKSTLLHLLGGLDIPTSGEVYVAGERMSALSDAQRGKLRNQALGFVYQFHHLLPEFTALENVMMPVLLSGEDVAVAKSQALQLLESVGLGHRVEHKPSELSGGERQRCAVARALVNKPGCVLGDEPTGNLDDKTAGTVFELMLELNRAQRTSLVLVTHDRGLARRLDRVLELHQGKLRELAPSAV.

The ABC transporter domain maps to 19–244; that stretch reads IRAEALAKTY…KLRELAPSAV (226 aa). 55–62 contributes to the ATP binding site; it reads GASGAGKS.

This sequence belongs to the ABC transporter superfamily. Lipoprotein translocase (TC 3.A.1.125) family. As to quaternary structure, the complex is composed of two ATP-binding proteins (LolD) and two transmembrane proteins (LolC and LolE).

The protein localises to the cell inner membrane. Its function is as follows. Part of the ABC transporter complex LolCDE involved in the translocation of mature outer membrane-directed lipoproteins, from the inner membrane to the periplasmic chaperone, LolA. Responsible for the formation of the LolA-lipoprotein complex in an ATP-dependent manner. In Xanthomonas axonopodis pv. citri (strain 306), this protein is Lipoprotein-releasing system ATP-binding protein LolD.